A 620-amino-acid polypeptide reads, in one-letter code: Chaperone protein HscA homolog (620 aa).

Belongs to the heat shock protein 70 family.

Chaperone involved in the maturation of iron-sulfur cluster-containing proteins. Has a low intrinsic ATPase activity which is markedly stimulated by HscB. This chain is Chaperone protein HscA homolog, found in Paracidovorax citrulli (strain AAC00-1) (Acidovorax citrulli).